Here is a 1164-residue protein sequence, read N- to C-terminus: DNA-directed RNA polymerase subunit beta (1164 aa).

The protein belongs to the RNA polymerase beta chain family. As to quaternary structure, the RNAP catalytic core consists of 2 alpha, 1 beta, 1 beta' and 1 omega subunit. When a sigma factor is associated with the core the holoenzyme is formed, which can initiate transcription.

It carries out the reaction RNA(n) + a ribonucleoside 5'-triphosphate = RNA(n+1) + diphosphate. Its function is as follows. DNA-dependent RNA polymerase catalyzes the transcription of DNA into RNA using the four ribonucleoside triphosphates as substrates. The protein is DNA-directed RNA polymerase subunit beta of Saccharopolyspora erythraea (strain ATCC 11635 / DSM 40517 / JCM 4748 / NBRC 13426 / NCIMB 8594 / NRRL 2338).